Reading from the N-terminus, the 164-residue chain is NADH-quinone oxidoreductase subunit B (164 aa).

Residues Cys-38, Cys-39, Cys-104, and Cys-133 each contribute to the [4Fe-4S] cluster site.

The protein belongs to the complex I 20 kDa subunit family. NDH-1 is composed of 14 different subunits. Subunits NuoB, C, D, E, F, and G constitute the peripheral sector of the complex. It depends on [4Fe-4S] cluster as a cofactor.

It localises to the cell inner membrane. It catalyses the reaction a quinone + NADH + 5 H(+)(in) = a quinol + NAD(+) + 4 H(+)(out). In terms of biological role, NDH-1 shuttles electrons from NADH, via FMN and iron-sulfur (Fe-S) centers, to quinones in the respiratory chain. The immediate electron acceptor for the enzyme in this species is believed to be ubiquinone. Couples the redox reaction to proton translocation (for every two electrons transferred, four hydrogen ions are translocated across the cytoplasmic membrane), and thus conserves the redox energy in a proton gradient. The polypeptide is NADH-quinone oxidoreductase subunit B (Protochlamydia amoebophila (strain UWE25)).